The chain runs to 461 residues: MKEYRTVAQIAGPLVFVEKTEPVGYSELVNIVTADGTVKRGQVLDTSDEIVVVQVFETTAGIGRDSGIRFTGETIKMPVGKDMLGRILSGGGKPIDGGPDIVPEKRLEITGAAINPYARSSPEDFIQTGISTIDGTNTLVRGQKLPIFSASGLPHNDVALQIARQAKVPGSTEEFAVVFAAMGITREEANYFMADFEKTGALERSVVFLNLADDPAVERTITPRLALTTAEYLAFDLGYHVLVILTDMTNYCEALRQIGAAREEVPGRRGYPGYMYTDLASIYERAGIIKGVKGSVTQIPILTMPGDDITHPIPDLTGYITEGQIVVNRELHRKGIYPPINVLPSLSRLMNLGIGEGHTREDHKKVSDQLYAAYAEGNDLRGLVAIVGKDALSERDRMFLEFADLFEDRFVRQGLYEDRSIEETLDLGWELLSTLPEEQLVRIDRELIQKYHPKYRKKAQG.

It belongs to the ATPase alpha/beta chains family. In terms of assembly, has multiple subunits with at least A(3), B(3), C, D, E, F, H, I and proteolipid K(x).

It is found in the cell membrane. Component of the A-type ATP synthase that produces ATP from ADP in the presence of a proton gradient across the membrane. The B chain is a regulatory subunit. This chain is A-type ATP synthase subunit B, found in Methanoculleus marisnigri (strain ATCC 35101 / DSM 1498 / JR1).